The chain runs to 541 residues: Calcium-dependent protein kinase 26 (541 aa).

Residues 1–11 (MGQCCTGGGKA) are compositionally biased toward gly residues. The tract at residues 1–74 (MGQCCTGGGK…AGPIGEVLER (74 aa)) is disordered. The N-myristoyl glycine moiety is linked to residue glycine 2. The span at 38 to 67 (AKQQPCSPAAKAAATEAAAAASSSKKPAGP) shows a compositional bias: low complexity. Residues 83 to 341 (YSIGKELGRG…AFQVLNHPWI (259 aa)) form the Protein kinase domain. ATP-binding positions include 89–97 (LGRGQFGVT) and lysine 112. Catalysis depends on aspartate 207, which acts as the Proton acceptor. An autoinhibitory domain region spans residues 347–377 (APDVPLDNVVLNRLKQFRAMNQFKKAALRII). EF-hand domains are found at residues 384–419 (EEIK…QGTK), 420–455 (FSDN…MNKM), 456–491 (DREE…QGLY), and 493–526 (ANEI…GSGC). Residues aspartate 397, aspartate 399, serine 401, threonine 403, glutamate 408, aspartate 433, aspartate 435, asparagine 437, glutamate 444, aspartate 469, aspartate 471, serine 473, tyrosine 475, glutamate 480, aspartate 504, asparagine 506, aspartate 508, arginine 510, and glutamate 515 each coordinate Ca(2+).

Belongs to the protein kinase superfamily. Ser/Thr protein kinase family. CDPK subfamily. In terms of tissue distribution, specifically expressed in heading panicles, spikelets and mature pollen grains. Not expressed in vegetative tissues.

The protein resides in the membrane. It carries out the reaction L-seryl-[protein] + ATP = O-phospho-L-seryl-[protein] + ADP + H(+). The enzyme catalyses L-threonyl-[protein] + ATP = O-phospho-L-threonyl-[protein] + ADP + H(+). Its activity is regulated as follows. Activated by calcium. Autophosphorylation may play an important role in the regulation of the kinase activity. May play a role in signal transduction pathways that involve calcium as a second messenger. The chain is Calcium-dependent protein kinase 26 from Oryza sativa subsp. japonica (Rice).